An 89-amino-acid chain; its full sequence is Small ribosomal subunit protein uS14B (89 aa).

Residues Lys-38–Tyr-61 form a disordered region. The span at Leu-39–Pro-58 shows a compositional bias: basic and acidic residues.

Belongs to the universal ribosomal protein uS14 family. In terms of assembly, part of the 30S ribosomal subunit. Contacts proteins S3 and S10.

Its function is as follows. Binds 16S rRNA, required for the assembly of 30S particles and may also be responsible for determining the conformation of the 16S rRNA at the A site. The sequence is that of Small ribosomal subunit protein uS14B from Enterococcus faecalis (strain ATCC 700802 / V583).